A 262-amino-acid polypeptide reads, in one-letter code: MTSTVIDIPDTVRAKIDVRNLNFYYNQFHALKNINMSIPDRKVTAFIGPSGCGKSTLLRTFNKMYALYPEQRAEGEISMDGENLLTSKQDISLLRAKVGMVFQKPTPFPMSIYDNIAFGVRLFEKLSRSEMDDRVEWALSKAALWNEAKDKLHQSGYGLSGGQQQRLCIARGIAIRPEVLLLDEPCSALDPISTGRIEELIAELKDEYTVVIVTHNMQQAARCSDYTAYMYLGELIEFGETEKIFIKPHRKETEDYITGRFG.

An ABC transporter domain is found at 16 to 257 (IDVRNLNFYY…PHRKETEDYI (242 aa)). 48–55 (GPSGCGKS) contributes to the ATP binding site.

This sequence belongs to the ABC transporter superfamily. Phosphate importer (TC 3.A.1.7) family. In terms of assembly, the complex is composed of two ATP-binding proteins (PstB), two transmembrane proteins (PstC and PstA) and a solute-binding protein (PstS).

The protein resides in the cell inner membrane. The catalysed reaction is phosphate(out) + ATP + H2O = ADP + 2 phosphate(in) + H(+). Its function is as follows. Part of the ABC transporter complex PstSACB involved in phosphate import. Responsible for energy coupling to the transport system. The polypeptide is Phosphate import ATP-binding protein PstB (Cupriavidus metallidurans (strain ATCC 43123 / DSM 2839 / NBRC 102507 / CH34) (Ralstonia metallidurans)).